The chain runs to 389 residues: Homoserine O-acetyltransferase (389 aa).

One can recognise an AB hydrolase-1 domain in the interval 63-371 (NAVLVLHALT…SSDYGHDGFL (309 aa)). The active-site Nucleophile is the Ser-168. Arg-240 is a binding site for substrate. Active-site residues include Asp-334 and His-367. Asp-368 is a binding site for substrate.

Belongs to the AB hydrolase superfamily. MetX family. As to quaternary structure, homodimer.

It localises to the cytoplasm. It carries out the reaction L-homoserine + acetyl-CoA = O-acetyl-L-homoserine + CoA. It participates in amino-acid biosynthesis; L-methionine biosynthesis via de novo pathway; O-acetyl-L-homoserine from L-homoserine: step 1/1. Functionally, transfers an acetyl group from acetyl-CoA to L-homoserine, forming acetyl-L-homoserine. This is Homoserine O-acetyltransferase from Clavibacter michiganensis subsp. michiganensis (strain NCPPB 382).